The sequence spans 312 residues: Methionyl-tRNA formyltransferase (312 aa).

110 to 113 (SLLP) contributes to the (6S)-5,6,7,8-tetrahydrofolate binding site.

This sequence belongs to the Fmt family.

It carries out the reaction L-methionyl-tRNA(fMet) + (6R)-10-formyltetrahydrofolate = N-formyl-L-methionyl-tRNA(fMet) + (6S)-5,6,7,8-tetrahydrofolate + H(+). Its function is as follows. Attaches a formyl group to the free amino group of methionyl-tRNA(fMet). The formyl group appears to play a dual role in the initiator identity of N-formylmethionyl-tRNA by promoting its recognition by IF2 and preventing the misappropriation of this tRNA by the elongation apparatus. The protein is Methionyl-tRNA formyltransferase of Mycobacterium ulcerans (strain Agy99).